The following is a 332-amino-acid chain: Sesquiterpene synthase MBR_10393 (332 aa).

2 residues coordinate Mg(2+): Asp-91 and Asp-96. Positions 91-96 match the DDXXXD motif motif; sequence DDLFVD. Substrate is bound at residue Arg-184. Residues Asn-230, Ser-234, and Glu-238 each contribute to the Mg(2+) site.

Belongs to the terpene synthase family. Requires Mg(2+) as cofactor.

The catalysed reaction is (2E,6E)-farnesyl diphosphate + H2O = (+)-corvol ether B + diphosphate. It carries out the reaction (2E,6E)-farnesyl diphosphate + H2O = (+)-corvol ether A + diphosphate. Its function is as follows. Terpene synthase that catalyzes the conversion of (2E,6E)-farnesyl diphosphate (FPP) into sesquiterpenes which are important for fungi-environment interactions. Produces a mixture consisting of 8 sesquiterpenes including corvol ethers A and B, as well as traces of epizonarene, gamma-cadinene, delta-cadinene, alpha-cadinene, alpha-cadinol, and an unidentified sesquiterpene. The major product is corvol ether B. This Metarhizium brunneum (strain ARSEF 3297) protein is Sesquiterpene synthase MBR_10393.